A 400-amino-acid chain; its full sequence is Cytohesin-2 (400 aa).

Residues 10-67 (DLTPEERMELENIRRRKQELLVEIQRLREELSEAMSEVEGLEANEGSKTLQRNRKMAM) are a coiled coil. In terms of domain architecture, SEC7 spans 72 to 201 (FNMDPKKGIQ…VIMLNTSLHN (130 aa)). Positions 259–376 (NPDREGWLLK…WIKSIQAAVS (118 aa)) constitute a PH domain. A 1,2-diacyl-sn-glycero-3-phospho-(1D-myo-inositol-3,4,5-trisphosphate) is bound by residues 268–276 (KLGGGRVKT), Arg-280, Tyr-291, Arg-301, Lys-339, Asn-350, and His-351. The tract at residues 387–395 (RKKRISVKK) is C-terminal autoinhibitory region.

In terms of assembly, heteromer. Composed of TAMALIN, CYTH2 and at least one GRM1. Interacts with ARRB1. Interacts with ARL4D; the interaction is direct. Directly interacts with CCDC120 through the coiled coil domain; this interaction stabilizes CCDC120, possibly by preventing its ubiquitination, and is required for neurite growth in a neuroblastoma cell line. Interacts with FRMD4A. Interacts (via N-terminal domain) with INAVA (via N-terminal domain). In terms of tissue distribution, present in all tissues tested, with highest protein levels in brain and adrenal.

It is found in the cell membrane. It localises to the cytoplasm. The protein resides in the cell projection. Its subcellular location is the growth cone. The protein localises to the cell junction. It is found in the tight junction. It localises to the adherens junction. Its function is as follows. Acts as a guanine-nucleotide exchange factor (GEF). Promotes guanine-nucleotide exchange on ARF1, ARF3 and ARF6. Activates ARF factors through replacement of GDP with GTP. The cell membrane form, in association with ARL4 proteins, recruits ARF6 to the plasma membrane. Involved in neurite growth. The chain is Cytohesin-2 (Cyth2) from Mus musculus (Mouse).